Consider the following 137-residue polypeptide: Putative pre-16S rRNA nuclease (137 aa).

This sequence belongs to the YqgF nuclease family.

The protein localises to the cytoplasm. Functionally, could be a nuclease involved in processing of the 5'-end of pre-16S rRNA. This chain is Putative pre-16S rRNA nuclease, found in Bacillus mycoides (strain KBAB4) (Bacillus weihenstephanensis).